Reading from the N-terminus, the 451-residue chain is UDP-N-acetyl-alpha-D-muramoyl-L-alanyl-L-glutamate epimerase (451 aa).

The protein belongs to the MurL family.

It carries out the reaction UDP-N-acetyl-alpha-D-muramoyl-L-alanyl-L-glutamate + ATP + H2O = UDP-N-acetyl-alpha-D-muramoyl-L-alanyl-D-glutamate + AMP + diphosphate + H(+). It functions in the pathway cell wall biogenesis; peptidoglycan biosynthesis. Its function is as follows. Cell wall formation. Catalyzes epimerization of the terminal L-glutamate in UDP-N-acetyl-alpha-D-muramoyl-L-alanyl-L-glutamate. The protein is UDP-N-acetyl-alpha-D-muramoyl-L-alanyl-L-glutamate epimerase of Xanthomonas oryzae pv. oryzae (strain MAFF 311018).